Consider the following 489-residue polypeptide: UDP-N-acetylmuramate--L-alanine ligase (489 aa).

ATP is bound at residue 128–134 (GTHGKTT).

The protein belongs to the MurCDEF family.

The protein localises to the cytoplasm. The catalysed reaction is UDP-N-acetyl-alpha-D-muramate + L-alanine + ATP = UDP-N-acetyl-alpha-D-muramoyl-L-alanine + ADP + phosphate + H(+). Its pathway is cell wall biogenesis; peptidoglycan biosynthesis. Its function is as follows. Cell wall formation. The protein is UDP-N-acetylmuramate--L-alanine ligase of Shewanella sediminis (strain HAW-EB3).